The following is a 400-amino-acid chain: Cysteine desulfurase 1 (400 aa).

Pyridoxal 5'-phosphate-binding positions include 71–72, Asn-150, Gln-178, and 198–200; these read GT and SGH. The residue at position 201 (Lys-201) is an N6-(pyridoxal phosphate)lysine. Residue Thr-236 participates in pyridoxal 5'-phosphate binding. Cys-324 acts as the Cysteine persulfide intermediate in catalysis. Position 324 (Cys-324) interacts with [2Fe-2S] cluster.

It belongs to the class-V pyridoxal-phosphate-dependent aminotransferase family. NifS/IscS subfamily. In terms of assembly, homodimer. Requires pyridoxal 5'-phosphate as cofactor.

The enzyme catalyses (sulfur carrier)-H + L-cysteine = (sulfur carrier)-SH + L-alanine. Its function is as follows. Catalyzes the removal of elemental sulfur atoms from cysteine to produce alanine. Seems to participate in the biosynthesis of the nitrogenase metalloclusters by providing the inorganic sulfur required for the Fe-S core formation. The sequence is that of Cysteine desulfurase 1 from Trichormus variabilis (strain ATCC 29413 / PCC 7937) (Anabaena variabilis).